The primary structure comprises 588 residues: Outer membrane transporter CdiB (588 aa).

A helical membrane pass occupies residues 33 to 55; it reads VVRYFSLLPCLCILSFSSPAAML. The 76-residue stretch at 104–179 folds into the POTRA domain; that stretch reads FTVSRIVVSG…GVLHITVMEG (76 aa).

This sequence belongs to the TPS (TC 1.B.20) family.

The protein resides in the cell outer membrane. Functionally, potential outer membrane protein component of a toxin-immunity protein module, which functions as a cellular contact-dependent growth inhibition (CDI) system. CDI modules allow bacteria to communicate with and inhibit the growth of closely related neighboring bacteria in a contact-dependent fashion. This protein may be required for secretion and assembly of the CdiA toxin protein. Its function is as follows. Probable member of a two partner secretion pathway (TPS) in which it mediates the secretion of CdiA. The chain is Outer membrane transporter CdiB from Escherichia coli O6:K15:H31 (strain 536 / UPEC).